Reading from the N-terminus, the 110-residue chain is Minor capsid protein VP2 (110 aa).

Belongs to the vesivirus VP2 protein family. Homooligomer. The portal-like structure consists in 12 copies of VP2. Interacts with capsid protein VP1.

It localises to the virion. The protein localises to the host cytoplasm. Minor structural protein that forms a portal-like structure at a unique three-fold axis of symmetry, following binding to the host receptor. The channel formed by VP2 may allow the delivery of the viral genome through the host endosomal membrane. The sequence is that of Minor capsid protein VP2 from Otariidae (fur seals &amp; sea lions).